We begin with the raw amino-acid sequence, 248 residues long: Small ribosomal subunit protein uS3 (248 aa).

One can recognise a KH type-2 domain in the interval isoleucine 38–lysine 106. A disordered region spans residues serine 214–glycine 248. Positions arginine 231–alanine 242 are enriched in basic residues.

The protein belongs to the universal ribosomal protein uS3 family. In terms of assembly, part of the 30S ribosomal subunit. Forms a tight complex with proteins S10 and S14.

Its function is as follows. Binds the lower part of the 30S subunit head. Binds mRNA in the 70S ribosome, positioning it for translation. The sequence is that of Small ribosomal subunit protein uS3 from Corynebacterium aurimucosum (strain ATCC 700975 / DSM 44827 / CIP 107346 / CN-1) (Corynebacterium nigricans).